Reading from the N-terminus, the 349-residue chain is UDP-glucose 4-epimerase (349 aa).

NAD(+) is bound by residues 10–12 (GFI), 31–35 (DNFAN), 66–67 (DV), and Lys-92. 132-134 (SAT) is a binding site for substrate. Tyr-158 functions as the Proton acceptor in the catalytic mechanism. Lys-162 and Tyr-186 together coordinate NAD(+). Substrate contacts are provided by residues 186–188 (YFN), 207–209 (NNL), 225–227 (TIY), Arg-240, and 303–306 (RPGD).

The protein belongs to the NAD(P)-dependent epimerase/dehydratase family. NAD(+) serves as cofactor. As to expression, expressed in gonads, vulva, intestine, hypdermis and nervous system.

The catalysed reaction is UDP-alpha-D-glucose = UDP-alpha-D-galactose. It catalyses the reaction UDP-N-acetyl-alpha-D-glucosamine = UDP-N-acetyl-alpha-D-galactosamine. It functions in the pathway carbohydrate metabolism; galactose metabolism. Its function is as follows. Catalyzes two distinct but analogous reactions: the reversible epimerization of UDP-glucose to UDP-galactose and the reversible epimerization of UDP-N-acetylglucosamine to UDP-N-acetylgalactosamine. The reaction with UDP-Gal plays a critical role in the Leloir pathway of galactose catabolism in which galactose is converted to the glycolytic intermediate glucose 6-phosphate. It contributes to the catabolism of dietary galactose and enables the endogenous biosynthesis of both UDP-Gal and UDP-GalNAc when exogenous sources are limited. Both UDP-sugar interconversions are important for the synthesis of glycoproteins and glycolipids. This Caenorhabditis elegans protein is UDP-glucose 4-epimerase.